A 628-amino-acid chain; its full sequence is ATP-binding cassette sub-family F member 2 (628 aa).

Residues 1–57 (MPSDLAKKKAAKKKEAAKARQRPRKGHEENGDAVTEPQVAEEKIEEANGRETTGDGE) are disordered. Residues 40 to 53 (AEEKIEEANGRETT) are compositionally biased toward basic and acidic residues. 2 consecutive ABC transporter domains span residues 91–330 (VHII…ENQM) and 401–618 (IMVQ…VDEE). 123 to 130 (GLNGIGKS) is a binding site for ATP. Phosphothreonine is present on threonine 223. Lysine 309 carries the post-translational modification N6-acetyllysine. An ATP-binding site is contributed by 435–442 (GPNGAGKS). Serine 517 carries the phosphoserine modification.

This sequence belongs to the ABC transporter superfamily. ABCF family. EF3 subfamily.

In Mus musculus (Mouse), this protein is ATP-binding cassette sub-family F member 2.